Consider the following 685-residue polypeptide: Polyphosphate kinase (685 aa).

N45 is an ATP binding site. Residues R372 and R402 each contribute to the Mg(2+) site. Residues 427–461 (PGLKIHAKLFLISRKEGDDVVRYAHIGTGNFNEKT) enclose the PLD phosphodiesterase 1 domain. H432 acts as the Phosphohistidine intermediate in catalysis. ATP contacts are provided by Y465, R561, and H589. One can recognise a PLD phosphodiesterase 2 domain in the interval 584 to 614 (DRYLEHDRIYIFDNAGDKQVYLSSADWMTRN).

It belongs to the polyphosphate kinase 1 (PPK1) family. Requires Mg(2+) as cofactor. Post-translationally, an intermediate of this reaction is the autophosphorylated ppk in which a phosphate is covalently linked to a histidine residue through a N-P bond.

The enzyme catalyses [phosphate](n) + ATP = [phosphate](n+1) + ADP. In terms of biological role, catalyzes the reversible transfer of the terminal phosphate of ATP to form a long-chain polyphosphate (polyP). The sequence is that of Polyphosphate kinase from Klebsiella pneumoniae.